Consider the following 521-residue polypeptide: Pentatricopeptide repeat-containing protein At4g26680, mitochondrial (521 aa).

The N-terminal 38 residues, 1 to 38 (MIRISIGVNRRLRYQFSSFAGYSGSENPRLFKTLGAAN), are a transit peptide targeting the mitochondrion. PPR repeat units follow at residues 167–201 (TPRV…GFLP), 202–236 (TVES…KISP), 237–271 (NPYT…GFRA), 272–306 (TDVS…GLQP), 307–341 (NVVT…NVAP), 342–376 (NTVT…GIQR), 377–411 (DILT…NLVP), 412–446 (NSST…GCHP), 447–481 (NEQT…SIPL), and 482–516 (DSRT…KFLQ).

Belongs to the PPR family. P subfamily.

Its subcellular location is the mitochondrion. This is Pentatricopeptide repeat-containing protein At4g26680, mitochondrial from Arabidopsis thaliana (Mouse-ear cress).